Consider the following 44-residue polypeptide: Photosystem II reaction center protein K (44 aa).

The propeptide occupies 1–7; the sequence is MESLLLA. A helical membrane pass occupies residues 23–43; that stretch reads FPVIPVFFLLLAFVWQAAVGF.

The protein belongs to the PsbK family. In terms of assembly, PSII is composed of 1 copy each of membrane proteins PsbA, PsbB, PsbC, PsbD, PsbE, PsbF, PsbH, PsbI, PsbJ, PsbK, PsbL, PsbM, PsbT, PsbX, PsbY, PsbZ, Psb30/Ycf12, at least 3 peripheral proteins of the oxygen-evolving complex and a large number of cofactors. It forms dimeric complexes.

The protein localises to the plastid. It localises to the chloroplast thylakoid membrane. Functionally, one of the components of the core complex of photosystem II (PSII). PSII is a light-driven water:plastoquinone oxidoreductase that uses light energy to abstract electrons from H(2)O, generating O(2) and a proton gradient subsequently used for ATP formation. It consists of a core antenna complex that captures photons, and an electron transfer chain that converts photonic excitation into a charge separation. This Thalassiosira pseudonana (Marine diatom) protein is Photosystem II reaction center protein K.